Consider the following 220-residue polypeptide: Apoptosis regulator BALF1 (220 aa).

It belongs to the Epstein-Barr virus BALF1 family. As to quaternary structure, interacts with BHRF1; this interaction modulates BHRF1 activity. Interacts with host BAX and BAK1.

It localises to the host cytoplasm. Modulates the antiapoptotic activity of the viral protein BHRF1. May also play an active part in oncogenesis in Burkitt's lymphomy and nasopharyngeal carcinoma. This Homo sapiens (Human) protein is Apoptosis regulator BALF1.